Consider the following 136-residue polypeptide: Histone H3 (136 aa).

The disordered stretch occupies residues 1-42 (MARTKQTARKSTGGKAPRKQIAAKAARKAAPSTGGVKKPHRY). Lys5 carries the post-translational modification N6,N6,N6-trimethyllysine; alternate. N6,N6-dimethyllysine; alternate is present on Lys5. An N6-methyllysine; alternate mark is found at Lys5 and Lys10. N6-acetyllysine; alternate is present on Lys10. The residue at position 11 (Ser11) is a Phosphoserine. Lys15 is modified (N6,N6-dimethyllysine; alternate). 5 positions are modified to N6-acetyllysine; alternate: Lys15, Lys19, Lys24, Lys28, and Lys37. N6-methyllysine; alternate is present on residues Lys19, Lys24, Lys28, and Lys37. Positions 19-31 (KQIAAKAARKAAP) are enriched in low complexity. N6,N6,N6-trimethyllysine; alternate is present on residues Lys28 and Lys37. N6,N6-dimethyllysine; alternate is present on residues Lys28 and Lys37. N6-acetyllysine occurs at positions 57 and 65. Lys80 is subject to N6,N6,N6-trimethyllysine; alternate. Residue Lys80 is modified to N6,N6-dimethyllysine; alternate. Lys80 is modified (N6-methyllysine; alternate).

It belongs to the histone H3 family. The nucleosome is a histone octamer containing two molecules each of H2A, H2B, H3 and H4 assembled in one H3-H4 heterotetramer and two H2A-H2B heterodimers. The octamer wraps approximately 147 bp of DNA. In terms of processing, phosphorylated to form H3S10ph. H3S10ph promotes subsequent H3K14ac formation and is required for transcriptional activation through TBP recruitment to the promoters. Post-translationally, mono-, di- and trimethylated by the COMPASS complex to form H3K4me1/2/3. H3K4me activates gene expression by regulating transcription elongation and plays a role in telomere length maintenance. H3K4me enrichment correlates with transcription levels, and occurs in a 5' to 3' gradient with H3K4me3 enrichment at the 5'-end of genes, shifting to H3K4me2 and then H3K4me1. Methylated by SET2 to form H3K36me. H3K36me represses gene expression. Methylated by DOT1 to form H3K79me. H3K79me is required for association of SIR proteins with telomeric regions and for telomeric silencing. The COMPASS-mediated formation of H3K4me2/3 and the DOT1-mediated formation of H3K79me require H2BK123ub1. Acetylation of histone H3 leads to transcriptional activation. H3K14ac formation by GCN5 is promoted by H3S10ph. H3K14ac can also be formed by ESA1. H3K56ac formation occurs predominantly in newly synthesized H3 molecules during G1, S and G2/M of the cell cycle and may be involved in DNA repair.

The protein localises to the nucleus. The protein resides in the chromosome. Functionally, core component of nucleosome. Nucleosomes wrap and compact DNA into chromatin, limiting DNA accessibility to the cellular machineries which require DNA as a template. Histones thereby play a central role in transcription regulation, DNA repair, DNA replication and chromosomal stability. DNA accessibility is regulated via a complex set of post-translational modifications of histones, also called histone code, and nucleosome remodeling. The polypeptide is Histone H3 (HHT1) (Coccidioides immitis (strain RS) (Valley fever fungus)).